The following is a 423-amino-acid chain: Voltage-dependent calcium channel gamma-8 subunit (423 aa).

Helical transmembrane passes span 19 to 39 (VQVL…TIAI), 127 to 147 (SSIF…CVAA), 157 to 177 (IILG…IGVI), and 207 to 227 (FGGL…NIYI). Phosphoserine occurs at positions 251 and 254. The disordered stretch occupies residues 271–304 (RRSRSSSRGSSEASPSRDASPGGPGGPGFASTDI). Residues 276–287 (SSRGSSEASPSR) are compositionally biased toward low complexity. The chain crosses the membrane as a helical span at residues 318–338 (VAAGLASAGGGGSGAGVGAYG). 2 disordered regions span residues 342-363 (GAAG…GFLT) and 378-423 (VTVT…TTPV). Pro residues predominate over residues 384-399 (PAAPAPAPAPPAPAAP). A compositionally biased stretch (polar residues) spans 410-423 (ASNTNTLNRKTTPV).

It belongs to the PMP-22/EMP/MP20 family. CACNG subfamily. Interacts with CACNA1C. Identified in a complex with the L-type calcium channel subunits CACNA1C, CACNA2D1 and either CACNB1 or CACNB2. Acts as an auxiliary subunit for AMPA-selective glutamate receptors (AMPARs). Found in a complex with GRIA1, GRIA2, GRIA3, GRIA4, CNIH2, CNIH3, CACNG2, CACNG3, CACNG4, CACNG5 and CACNG7. Interacts with CNIH2. Found in a complex with GRIA1, GRIA2, GRIA3, GRIA4, DLG4 and CNIH2. In terms of processing, palmitoylated. Probably palmitoylated by ZDHHC3 and ZDHHC7.

It is found in the cell membrane. The protein resides in the postsynaptic density membrane. Regulates the activity of L-type calcium channels that contain CACNA1C as pore-forming subunit. Regulates the trafficking and gating properties of AMPA-selective glutamate receptors (AMPARs). Promotes their targeting to the cell membrane and synapses and modulates their gating properties by slowing their rates of activation, deactivation and desensitization and by mediating their resensitization. Does not show subunit-specific AMPA receptor regulation and regulates all AMPAR subunits. Thought to stabilize the calcium channel in an inactivated (closed) state. This is Voltage-dependent calcium channel gamma-8 subunit from Mus musculus (Mouse).